Consider the following 155-residue polypeptide: Large ribosomal subunit protein uL22 (155 aa).

The tract at residues 109–155 (HITVIVESRPPKKAGKQGASASAARARRAQASKAATKKATDSKEGSE) is disordered. The segment covering 146-155 (KATDSKEGSE) has biased composition (basic and acidic residues).

Belongs to the universal ribosomal protein uL22 family. In terms of assembly, part of the 50S ribosomal subunit.

In terms of biological role, this protein binds specifically to 23S rRNA; its binding is stimulated by other ribosomal proteins, e.g. L4, L17, and L20. It is important during the early stages of 50S assembly. It makes multiple contacts with different domains of the 23S rRNA in the assembled 50S subunit and ribosome. The globular domain of the protein is located near the polypeptide exit tunnel on the outside of the subunit, while an extended beta-hairpin is found that lines the wall of the exit tunnel in the center of the 70S ribosome. The polypeptide is Large ribosomal subunit protein uL22 (Mycolicibacterium vanbaalenii (strain DSM 7251 / JCM 13017 / BCRC 16820 / KCTC 9966 / NRRL B-24157 / PYR-1) (Mycobacterium vanbaalenii)).